The chain runs to 319 residues: tRNA-cytidine(32) 2-sulfurtransferase (319 aa).

A PP-loop motif motif is present at residues 49–54 (SGGKDS). [4Fe-4S] cluster is bound by residues C124, C127, and C215.

It belongs to the TtcA family. As to quaternary structure, homodimer. Requires Mg(2+) as cofactor. The cofactor is [4Fe-4S] cluster.

It is found in the cytoplasm. It catalyses the reaction cytidine(32) in tRNA + S-sulfanyl-L-cysteinyl-[cysteine desulfurase] + AH2 + ATP = 2-thiocytidine(32) in tRNA + L-cysteinyl-[cysteine desulfurase] + A + AMP + diphosphate + H(+). Its pathway is tRNA modification. Catalyzes the ATP-dependent 2-thiolation of cytidine in position 32 of tRNA, to form 2-thiocytidine (s(2)C32). The sulfur atoms are provided by the cysteine/cysteine desulfurase (IscS) system. The sequence is that of tRNA-cytidine(32) 2-sulfurtransferase from Shewanella amazonensis (strain ATCC BAA-1098 / SB2B).